Reading from the N-terminus, the 461-residue chain is Bifunctional protein GlmU (461 aa).

Residues 1–232 (MNLQIIILAA…SFEVQGINNR (232 aa)) are pyrophosphorylase. UDP-N-acetyl-alpha-D-glucosamine contacts are provided by residues 8–11 (LAAG), Lys-22, Gln-73, and 78–79 (GT). Asp-102 provides a ligand contact to Mg(2+). UDP-N-acetyl-alpha-D-glucosamine-binding residues include Gly-142, Glu-157, and Asn-230. A Mg(2+)-binding site is contributed by Asn-230. Residues 233–253 (QQLQQLERTWQQRAANQLMEK) form a linker region. The segment at 254–461 (GATLADANRF…WKRPVKRERD (208 aa)) is N-acetyltransferase. The UDP-N-acetyl-alpha-D-glucosamine site is built by Arg-336 and Lys-354. Residue His-366 is the Proton acceptor of the active site. UDP-N-acetyl-alpha-D-glucosamine is bound by residues Tyr-369 and Asn-380. Residues Ala-383, 389–390 (NY), Ser-408, and Ala-426 each bind acetyl-CoA.

In the N-terminal section; belongs to the N-acetylglucosamine-1-phosphate uridyltransferase family. It in the C-terminal section; belongs to the transferase hexapeptide repeat family. In terms of assembly, homotrimer. It depends on Mg(2+) as a cofactor.

The protein resides in the cytoplasm. The catalysed reaction is alpha-D-glucosamine 1-phosphate + acetyl-CoA = N-acetyl-alpha-D-glucosamine 1-phosphate + CoA + H(+). It catalyses the reaction N-acetyl-alpha-D-glucosamine 1-phosphate + UTP + H(+) = UDP-N-acetyl-alpha-D-glucosamine + diphosphate. It functions in the pathway nucleotide-sugar biosynthesis; UDP-N-acetyl-alpha-D-glucosamine biosynthesis; N-acetyl-alpha-D-glucosamine 1-phosphate from alpha-D-glucosamine 6-phosphate (route II): step 2/2. It participates in nucleotide-sugar biosynthesis; UDP-N-acetyl-alpha-D-glucosamine biosynthesis; UDP-N-acetyl-alpha-D-glucosamine from N-acetyl-alpha-D-glucosamine 1-phosphate: step 1/1. Its pathway is bacterial outer membrane biogenesis; LPS lipid A biosynthesis. Its function is as follows. Catalyzes the last two sequential reactions in the de novo biosynthetic pathway for UDP-N-acetylglucosamine (UDP-GlcNAc). The C-terminal domain catalyzes the transfer of acetyl group from acetyl coenzyme A to glucosamine-1-phosphate (GlcN-1-P) to produce N-acetylglucosamine-1-phosphate (GlcNAc-1-P), which is converted into UDP-GlcNAc by the transfer of uridine 5-monophosphate (from uridine 5-triphosphate), a reaction catalyzed by the N-terminal domain. The sequence is that of Bifunctional protein GlmU from Legionella pneumophila (strain Paris).